The sequence spans 140 residues: Vesicle transport protein GOT1 (140 aa).

The next 4 helical transmembrane spans lie at 12–32, 35–55, 71–91, and 96–116; these read IGLG…IFVF, GLIA…IGIN, ISFG…GLLL, and FLVL…RIPL.

Belongs to the GOT1 family. In terms of assembly, homodimer. No interactions with STL1, STL2, CESA1, CESA3, CESA4, CESA6, CESA7 or CESA8.

The protein localises to the golgi apparatus membrane. May be involved in fusion of ER-derived transport vesicles with the Golgi complex. In Arabidopsis thaliana (Mouse-ear cress), this protein is Vesicle transport protein GOT1.